A 102-amino-acid polypeptide reads, in one-letter code: Carboxysome shell protein CsoS1C (102 aa).

In terms of domain architecture, BMC spans 8-93; sequence ALGMIETRGL…PHKEVEPVLA (86 aa).

This sequence belongs to the bacterial microcompartments protein family. CsoS1 subfamily. Homohexamer with a small central pore.

It localises to the carboxysome. One of shell proteins of the carboxysome, a polyhedral inclusion where RuBisCO (ribulose bisphosphate carboxylase, ccbL-ccbS) is sequestered. Assembles into hexamers which make sheets that form the facets of the polyhedral carboxysome. The shell probably limits the diffusion of CO(2) into and out of the carboxysome. The sequence is that of Carboxysome shell protein CsoS1C from Hydrogenovibrio crunogenus (strain DSM 25203 / XCL-2) (Thiomicrospira crunogena).